The following is a 552-amino-acid chain: Protein FAM234A (552 aa).

The segment covering 1–22 has biased composition (basic and acidic residues); it reads MLDHKDLEAEIHPLKNEERKSQ. A disordered region spans residues 1 to 40; the sequence is MLDHKDLEAEIHPLKNEERKSQENLGNPSKNEDNVKSAPP. The Cytoplasmic portion of the chain corresponds to 1-49; the sequence is MLDHKDLEAEIHPLKNEERKSQENLGNPSKNEDNVKSAPPQSRLSRCRA. Ser-21 bears the Phosphoserine mark. A helical; Signal-anchor for type II membrane protein membrane pass occupies residues 50–70; the sequence is AAFFLSLFLCLFVVFVVSFVI. Residues 71-552 are Extracellular-facing; that stretch reads PCPDRPASQR…FSRLRYQSEA (482 aa). Asn-116, Asn-314, Asn-389, and Asn-473 each carry an N-linked (GlcNAc...) asparagine glycan.

Belongs to the FAM234 family.

It localises to the membrane. This Homo sapiens (Human) protein is Protein FAM234A.